Consider the following 108-residue polypeptide: DNA-binding protein HBbu (108 aa).

Belongs to the bacterial histone-like protein family.

Histone-like DNA-binding protein which is capable of wrapping DNA to stabilize it, and thus to prevent its denaturation under extreme environmental conditions. This is DNA-binding protein HBbu (hbb) from Borreliella afzelii (Borrelia afzelii).